The chain runs to 285 residues: Glutamate racemase (285 aa).

Residues 30–31 (DS) and 62–63 (YG) each bind substrate. The active-site Proton donor/acceptor is the Cys94. A substrate-binding site is contributed by 95–96 (NT). The Proton donor/acceptor role is filled by Cys206. 207-208 (TH) serves as a coordination point for substrate.

It belongs to the aspartate/glutamate racemases family.

It carries out the reaction L-glutamate = D-glutamate. The protein operates within cell wall biogenesis; peptidoglycan biosynthesis. Functionally, provides the (R)-glutamate required for cell wall biosynthesis. The polypeptide is Glutamate racemase (Pectobacterium atrosepticum (strain SCRI 1043 / ATCC BAA-672) (Erwinia carotovora subsp. atroseptica)).